The primary structure comprises 212 residues: Dephospho-CoA kinase (212 aa).

One can recognise a DPCK domain in the interval 4–204 (IVALTGGICS…RDYLKAEKTT (201 aa)). 12–17 (CSGKSV) provides a ligand contact to ATP.

Belongs to the CoaE family.

It is found in the cytoplasm. It carries out the reaction 3'-dephospho-CoA + ATP = ADP + CoA + H(+). It participates in cofactor biosynthesis; coenzyme A biosynthesis; CoA from (R)-pantothenate: step 5/5. Catalyzes the phosphorylation of the 3'-hydroxyl group of dephosphocoenzyme A to form coenzyme A. The sequence is that of Dephospho-CoA kinase from Blochmanniella pennsylvanica (strain BPEN).